We begin with the raw amino-acid sequence, 141 residues long: Hemoglobin subunit alpha-D (141 aa).

The region spanning 1–141 is the Globin domain; the sequence is VLTHEDCELL…VGDMLAEKYR (141 aa). Heme b is bound by residues His-58 and His-87.

This sequence belongs to the globin family. In terms of assembly, there are three forms of hemoglobin in Sphenodon: A, A' and D. Hb A is a tetramer of two alpha-A and two beta-1, Hb A' is a tetramer of two alpha-a and two beta-2, Hb D is a tetramer of two alpha-D and two beta-2. In terms of tissue distribution, red blood cells.

Involved in oxygen transport from the lung to the various peripheral tissues. In Sphenodon punctatus (Tuatara), this protein is Hemoglobin subunit alpha-D (HBAD).